The sequence spans 244 residues: 5-oxoprolinase subunit A (244 aa).

This sequence belongs to the LamB/PxpA family. In terms of assembly, forms a complex composed of PxpA, PxpB and PxpC.

The catalysed reaction is 5-oxo-L-proline + ATP + 2 H2O = L-glutamate + ADP + phosphate + H(+). Functionally, catalyzes the cleavage of 5-oxoproline to form L-glutamate coupled to the hydrolysis of ATP to ADP and inorganic phosphate. The protein is 5-oxoprolinase subunit A of Salmonella typhimurium (strain LT2 / SGSC1412 / ATCC 700720).